The sequence spans 201 residues: Probable GTP-binding protein EngB (201 aa).

The EngB-type G domain maps to 22–197 (RLPEYAFIGR…LDYIDSINQE (176 aa)). Residues 30 to 37 (GRSNVGKS), 57 to 61 (GKTQL), 75 to 78 (DLPG), 142 to 145 (TKAD), and 173 to 178 (VFITSS) contribute to the GTP site. Residues Ser37 and Thr59 each coordinate Mg(2+).

This sequence belongs to the TRAFAC class TrmE-Era-EngA-EngB-Septin-like GTPase superfamily. EngB GTPase family. It depends on Mg(2+) as a cofactor.

Necessary for normal cell division and for the maintenance of normal septation. The sequence is that of Probable GTP-binding protein EngB from Porphyromonas gingivalis (strain ATCC 33277 / DSM 20709 / CIP 103683 / JCM 12257 / NCTC 11834 / 2561).